The primary structure comprises 318 residues: Pseudouridine-5'-phosphate glycosidase 1 (318 aa).

Glu-29 functions as the Proton donor in the catalytic mechanism. Residues Lys-90 and Val-110 each coordinate substrate. Asp-142 contributes to the Mn(2+) binding site. 144–146 (SAD) serves as a coordination point for substrate. Lys-163 functions as the Nucleophile in the catalytic mechanism.

Belongs to the pseudouridine-5'-phosphate glycosidase family. In terms of assembly, homotrimer. Mn(2+) is required as a cofactor.

The catalysed reaction is D-ribose 5-phosphate + uracil = psi-UMP + H2O. Its function is as follows. Catalyzes the reversible cleavage of pseudouridine 5'-phosphate (PsiMP) to ribose 5-phosphate and uracil. Functions biologically in the cleavage direction, as part of a pseudouridine degradation pathway. This is Pseudouridine-5'-phosphate glycosidase 1 from Photorhabdus laumondii subsp. laumondii (strain DSM 15139 / CIP 105565 / TT01) (Photorhabdus luminescens subsp. laumondii).